The primary structure comprises 454 residues: Tegument protein VP16 homolog (454 aa).

The protein belongs to the herpesviridae tegument protein VP16 protein family. In terms of assembly, associates with the VP16-induced complex; binding to host HCFC1 activates VP16 for association with the octamer motif-binding host protein POU2F1, to form a multiprotein-DNA complex responsible for activating transcription of the viral immediate early genes.

It localises to the virion tegument. The protein localises to the host nucleus. In terms of biological role, transcriptional activator of immediate-early (IE) gene products (alpha genes). Acts as a key activator of lytic infection by initiating the lytic program through the assembly of the transcriptional regulatory VP16-induced complex composed of VP16 and two cellular factors, HCFC1 and POU2F1. VP16-induced complex represents a regulatory switch: when it is on, it promotes IE-gene expression and thus lytic infection, and when it is off, it limits IE-gene transcription favoring latent infection. Its function is as follows. May play a role in the aggregation of tegument proteins around nucleocapsids during virus morphogenesis. The chain is Tegument protein VP16 homolog (12) from Equine herpesvirus 4 (strain 1942) (EHV-4).